The primary structure comprises 836 residues: Conserved oligomeric Golgi complex subunit 7 (836 aa).

Coiled-coil stretches lie at residues 29–49 (QDSL…ASEE) and 107–127 (LARV…LQDA). The interval 246 to 265 (KLANERSESQRLSSGDEFQS) is disordered.

The protein belongs to the COG7 family. In terms of assembly, component of the conserved oligomeric Golgi complex which is composed of eight different subunits and is required for normal Golgi morphology and localization. Interacts with COG5 and COG6.

The protein localises to the golgi apparatus membrane. Functionally, required for normal Golgi function. Necessary for embryo development and pigmentation, especially for the expansion of cells and organs, and for the formation of the organized shoot apical meristem (SAM). Probably involved in the generation of the extra-cellular matrix. The polypeptide is Conserved oligomeric Golgi complex subunit 7 (Arabidopsis thaliana (Mouse-ear cress)).